Consider the following 157-residue polypeptide: Protein snakeskin (157 aa).

The Cytoplasmic segment spans residues 2–6; it reads VSVQT. The helical transmembrane segment at 7–27 threads the bilayer; sequence IATIVVKTFKIVLNIIILVLY. At 28-53 the chain is on the extracellular side; it reads RTGYNGEFLGVGGTWNLNEEKNPDAE. A helical transmembrane segment spans residues 54–74; it reads IVASGVIVGYLIYTLVQIVTF. Topologically, residues 75–87 are cytoplasmic; the sequence is LFGTTEHKRALSE. The helical transmembrane segment at 88-108 threads the bilayer; it reads IVMNFVGVFLWIAVGAVALHY. Residues 109 to 130 lie on the Extracellular side of the membrane; sequence WGGYQGEHQFQFVFAEKQVGLA. A helical membrane pass occupies residues 131 to 151; sequence VGALCVINGAIYLLDTALSVI. Topologically, residues 152-157 are cytoplasmic; that stretch reads HFTKEM.

Expressed in midgut epithelium (at protein level).

The protein resides in the apicolateral cell membrane. It is found in the cell junction. It localises to the septate junction. Required for assembly of smooth septate junctions (sSJs). May be important for barrier function of the midgut epithelium. This chain is Protein snakeskin, found in Bombyx mori (Silk moth).